The primary structure comprises 176 residues: NAD(P)H-quinone oxidoreductase subunit 6, chloroplastic (176 aa).

Helical transmembrane passes span 10–30, 32–52, 61–81, 92–112, and 152–172; these read FLLV…VLLT, PIYS…FYIL, AQLL…VMFM, LWTV…VSLM, and FFLP…GAIA.

The protein belongs to the complex I subunit 6 family. NDH is composed of at least 16 different subunits, 5 of which are encoded in the nucleus.

It is found in the plastid. The protein resides in the chloroplast thylakoid membrane. It carries out the reaction a plastoquinone + NADH + (n+1) H(+)(in) = a plastoquinol + NAD(+) + n H(+)(out). It catalyses the reaction a plastoquinone + NADPH + (n+1) H(+)(in) = a plastoquinol + NADP(+) + n H(+)(out). NDH shuttles electrons from NAD(P)H:plastoquinone, via FMN and iron-sulfur (Fe-S) centers, to quinones in the photosynthetic chain and possibly in a chloroplast respiratory chain. The immediate electron acceptor for the enzyme in this species is believed to be plastoquinone. Couples the redox reaction to proton translocation, and thus conserves the redox energy in a proton gradient. The protein is NAD(P)H-quinone oxidoreductase subunit 6, chloroplastic (ndhG) of Eucalyptus globulus subsp. globulus (Tasmanian blue gum).